Here is a 1785-residue protein sequence, read N- to C-terminus: Mellein synthase (1785 aa).

The segment at 1 to 36 (MATPDDPATPALSLSASNSSSPTAASSVPPPTGTSE) is disordered. Residues 8-27 (ATPALSLSASNSSSPTAASS) are compositionally biased toward low complexity. The region spanning 39–464 (YDDVAIIGMS…GTVSHAIIEQ (426 aa)) is the Ketosynthase family 3 (KS3) domain. Active-site for beta-ketoacyl synthase activity residues include C211, H346, and H386. The segment at 575–888 (VWVFSGHGSH…AVAQLWTKGV (314 aa)) is malonyl-CoA:ACP transacylase (MAT) domain. The For malonyltransferase activity role is filled by S661. An N-terminal hotdog fold region spans residues 933–1047 (NNMLGQRMVV…ASWENEPSAN (115 aa)). Residues 933 to 1206 (NNMLGQRMVV…FTEVEATPTK (274 aa)) form the PKS/mFAS DH domain. Residues 935-1203 (MLGQRMVVAG…SIRFTEVEAT (269 aa)) form a dehydratase (DH) domain region. H965 functions as the Proton acceptor; for dehydratase activity in the catalytic mechanism. The tract at residues 1062–1206 (GTRVSETFSV…FTEVEATPTK (145 aa)) is C-terminal hotdog fold. Catalysis depends on D1123, which acts as the Proton donor; for dehydratase activity. The ketoreductase (KR) domain stretch occupies residues 1418–1608 (GTYVLTGGLG…AIAFQWTAWR (191 aa)). Over residues 1681–1698 (QDQSAPASGNASDSSGRP) the composition is skewed to polar residues. A disordered region spans residues 1681-1701 (QDQSAPASGNASDSSGRPTAS). The 76-residue stretch at 1706–1781 (PWLDVKIREC…AMVGWFQKQF (76 aa)) folds into the Carrier domain. An O-(pantetheine 4'-phosphoryl)serine modification is found at S1741.

Its pathway is secondary metabolite biosynthesis. In terms of biological role, polyketide synthase that produces (R)-mellein, a secondary metabolite that inhibits the germination of wheat (Triticum aestivum) and barrel medic (Medicago truncatula) seeds. Condensates 1 acetate starter unit and 4 extender malonate units. The nascent pentaketide intermediate then undergoes an aldol cyclization and is aromatized via dehydration. The (R)-O-methylmellein isolated from P.nodorum is most likely to be derived from (R)-mellein via an additional methylation at the hydroxyl group. Interestingly, no O-methyltransferase gene is encoded in the vicinity of MLNS on the chromosome. Thus, the O-methylation is likely to be catalyzed by an endogenous O-methyltransferase encoded elsewhere in the genome of P.nodorum. This Phaeosphaeria nodorum (strain SN15 / ATCC MYA-4574 / FGSC 10173) (Glume blotch fungus) protein is Mellein synthase.